The primary structure comprises 447 residues: Peptide-N(4)-(N-acetyl-beta-glucosaminyl)asparagine amidase (447 aa).

The Zn(2+) site is built by C209, C212, C241, and C244. C267 (nucleophile) is an active-site residue. Residues H294 and D311 contribute to the active site.

The protein belongs to the transglutaminase-like superfamily. PNGase family. It depends on Zn(2+) as a cofactor.

The protein localises to the cytoplasm. The catalysed reaction is Hydrolysis of an N(4)-(acetyl-beta-D-glucosaminyl)asparagine residue in which the glucosamine residue may be further glycosylated, to yield a (substituted) N-acetyl-beta-D-glucosaminylamine and a peptide containing an aspartate residue.. In terms of biological role, specifically deglycosylates the denatured form of N-linked glycoproteins in the cytoplasm and assists their proteasome-mediated degradation. Cleaves the beta-aspartyl-glucosamine (GlcNAc) of the glycan and the amide side chain of Asn, converting Asn to Asp. Prefers proteins containing high-mannose over those bearing complex type oligosaccharides. Can recognize misfolded proteins in the endoplasmic reticulum that are exported to the cytosol to be destroyed and deglycosylate them, while it has no activity toward native proteins. Deglycosylation is a prerequisite for subsequent proteasome-mediated degradation of some, but not all, misfolded glycoproteins. This chain is Peptide-N(4)-(N-acetyl-beta-glucosaminyl)asparagine amidase (PNG1), found in Oryza sativa subsp. japonica (Rice).